The chain runs to 107 residues: Parvalbumin beta (107 aa).

S1 carries the N-acetylserine modification. EF-hand domains are found at residues 37–72 and 76–107; these read KSLD…FSPS and LTDA…MIKA. Residues D50, D52, S54, F56, E58, E61, D89, D91, D93, M95, and E100 each coordinate Ca(2+).

The protein belongs to the parvalbumin family.

Functionally, in muscle, parvalbumin is thought to be involved in relaxation after contraction. It binds two calcium ions. This chain is Parvalbumin beta, found in Esox lucius (Northern pike).